Here is a 474-residue protein sequence, read N- to C-terminus: Trifunctional enzyme subunit beta, mitochondrial (474 aa).

The N-terminal 33 residues, 1 to 33, are a transit peptide targeting the mitochondrion; sequence MTILTYPFKNLPTASKWALRFSIRPLSCSSQLR. K72 carries the post-translational modification N6-acetyllysine; alternate. K72 carries the N6-succinyllysine; alternate modification. C138 functions as the Acyl-thioester intermediate in the catalytic mechanism. Residues 173 to 220 lie within the membrane without spanning it; sequence IRHSRKMRKLMLDLNKAKSMGQRLSLISKFRFNFLAPELPAVSEFSTS. K188 is subject to N6-acetyllysine; alternate. K188 is subject to N6-succinyllysine; alternate. 3 positions are modified to N6-succinyllysine: K190, K272, and K291. N6-acetyllysine; alternate is present on K293. The residue at position 293 (K293) is an N6-succinyllysine; alternate. Residue K298 is modified to N6-acetyllysine. K332 is subject to N6-acetyllysine; alternate. K332 carries the N6-succinyllysine; alternate modification. N6-acetyllysine occurs at positions 348 and 361. Catalysis depends on C458, which acts as the Proton donor/acceptor.

This sequence belongs to the thiolase-like superfamily. Thiolase family. Heterotetramer of 2 alpha/HADHA and 2 beta/HADHB subunits; forms the mitochondrial trifunctional enzyme. Also purified as higher order heterooligomers including a 4 alpha/HADHA and 4 beta/HADHB heterooligomer which physiological significance remains unclear. The mitochondrial trifunctional enzyme interacts with MTLN. Interacts with RSAD2/viperin.

It is found in the mitochondrion. The protein localises to the mitochondrion inner membrane. The protein resides in the mitochondrion outer membrane. Its subcellular location is the endoplasmic reticulum. The enzyme catalyses an acyl-CoA + acetyl-CoA = a 3-oxoacyl-CoA + CoA. It carries out the reaction butanoyl-CoA + acetyl-CoA = 3-oxohexanoyl-CoA + CoA. The catalysed reaction is hexanoyl-CoA + acetyl-CoA = 3-oxooctanoyl-CoA + CoA. It catalyses the reaction octanoyl-CoA + acetyl-CoA = 3-oxodecanoyl-CoA + CoA. The enzyme catalyses decanoyl-CoA + acetyl-CoA = 3-oxododecanoyl-CoA + CoA. It carries out the reaction dodecanoyl-CoA + acetyl-CoA = 3-oxotetradecanoyl-CoA + CoA. The catalysed reaction is tetradecanoyl-CoA + acetyl-CoA = 3-oxohexadecanoyl-CoA + CoA. It functions in the pathway lipid metabolism; fatty acid beta-oxidation. In terms of biological role, mitochondrial trifunctional enzyme catalyzes the last three of the four reactions of the mitochondrial beta-oxidation pathway. The mitochondrial beta-oxidation pathway is the major energy-producing process in tissues and is performed through four consecutive reactions breaking down fatty acids into acetyl-CoA. Among the enzymes involved in this pathway, the trifunctional enzyme exhibits specificity for long-chain fatty acids. Mitochondrial trifunctional enzyme is a heterotetrameric complex composed of two proteins, the trifunctional enzyme subunit alpha/HADHA carries the 2,3-enoyl-CoA hydratase and the 3-hydroxyacyl-CoA dehydrogenase activities, while the trifunctional enzyme subunit beta/HADHB described here bears the 3-ketoacyl-CoA thiolase activity. In Homo sapiens (Human), this protein is Trifunctional enzyme subunit beta, mitochondrial (HADHB).